We begin with the raw amino-acid sequence, 208 residues long: Interleukin-6 (208 aa).

The signal sequence occupies residues 1–27 (MTFLSTSAFSPLAFSLGLLLVVATAFP). A disulfide bridge connects residues cysteine 68 and cysteine 74. Serine 77 carries the post-translational modification Phosphoserine. Residues cysteine 97 and cysteine 107 are joined by a disulfide bond.

The protein belongs to the IL-6 superfamily. Component of a hexamer of two molecules each of IL6, IL6R and IL6ST; first binds to IL6R to associate with the signaling subunit IL6ST. Interacts with IL6R (via the N-terminal ectodomain); this interaction may be affected by IL6R-binding with SORL1, hence decreasing IL6 cis signaling. Interacts with SORL1 (via the N-terminal ectodomain); this interaction leads to IL6 internalization and lysosomal degradation. May form a trimeric complex with the soluble SORL1 ectodomain and soluble IL6R receptor; this interaction might stabilize circulating IL6, hence promoting IL6 trans signaling.

It localises to the secreted. In terms of biological role, cytokine with a wide variety of biological functions in immunity, tissue regeneration, and metabolism. Binds to IL6R, then the complex associates to the signaling subunit IL6ST/gp130 to trigger the intracellular IL6-signaling pathway. The interaction with the membrane-bound IL6R and IL6ST stimulates 'classic signaling', whereas the binding of IL6 and soluble IL6R to IL6ST stimulates 'trans-signaling'. Alternatively, 'cluster signaling' occurs when membrane-bound IL6:IL6R complexes on transmitter cells activate IL6ST receptors on neighboring receiver cells. IL6 is a potent inducer of the acute phase response. Rapid production of IL6 contributes to host defense during infection and tissue injury, but excessive IL6 synthesis is involved in disease pathology. In the innate immune response, is synthesized by myeloid cells, such as macrophages and dendritic cells, upon recognition of pathogens through toll-like receptors (TLRs) at the site of infection or tissue injury. In the adaptive immune response, is required for the differentiation of B cells into immunoglobulin-secreting cells. Plays a major role in the differentiation of CD4(+) T cell subsets. Essential factor for the development of T follicular helper (Tfh) cells that are required for the induction of germinal-center formation. Required to drive naive CD4(+) T cells to the Th17 lineage. Also required for proliferation of myeloma cells and the survival of plasmablast cells. Functionally, acts as an essential factor in bone homeostasis and on vessels directly or indirectly by induction of VEGF, resulting in increased angiogenesis activity and vascular permeability. Induces, through 'trans-signaling' and synergistically with IL1B and TNF, the production of VEGF. Involved in metabolic controls, is discharged into the bloodstream after muscle contraction increasing lipolysis and improving insulin resistance. 'Trans-signaling' in central nervous system also regulates energy and glucose homeostasis. Mediates, through GLP-1, crosstalk between insulin-sensitive tissues, intestinal L cells and pancreatic islets to adapt to changes in insulin demand. Also acts as a myokine. Plays a protective role during liver injury, being required for maintenance of tissue regeneration. Also has a pivotal role in iron metabolism by regulating HAMP/hepcidin expression upon inflammation or bacterial infection. Through activation of IL6ST-YAP-NOTCH pathway, induces inflammation-induced epithelial regeneration. This is Interleukin-6 (IL6) from Felis catus (Cat).